We begin with the raw amino-acid sequence, 938 residues long: Isoleucine--tRNA ligase (938 aa).

The 'HIGH' region signature appears at 58–68 (PYANGNIHLGH). Glu-562 contacts L-isoleucyl-5'-AMP. The 'KMSKS' region signature appears at 603–607 (KMSKS). Position 606 (Lys-606) interacts with ATP. 4 residues coordinate Zn(2+): Cys-901, Cys-904, Cys-921, and Cys-924.

This sequence belongs to the class-I aminoacyl-tRNA synthetase family. IleS type 1 subfamily. Monomer. It depends on Zn(2+) as a cofactor.

It is found in the cytoplasm. The enzyme catalyses tRNA(Ile) + L-isoleucine + ATP = L-isoleucyl-tRNA(Ile) + AMP + diphosphate. Its function is as follows. Catalyzes the attachment of isoleucine to tRNA(Ile). As IleRS can inadvertently accommodate and process structurally similar amino acids such as valine, to avoid such errors it has two additional distinct tRNA(Ile)-dependent editing activities. One activity is designated as 'pretransfer' editing and involves the hydrolysis of activated Val-AMP. The other activity is designated 'posttransfer' editing and involves deacylation of mischarged Val-tRNA(Ile). The sequence is that of Isoleucine--tRNA ligase from Glaesserella parasuis serovar 5 (strain SH0165) (Haemophilus parasuis).